The chain runs to 515 residues: Fatty acyl-CoA reductase 1 (515 aa).

Topologically, residues 1-465 (MVSIPEYYEG…ARKHLNKLRN (465 aa)) are cytoplasmic. Positions 451–507 (SGLPAARKHLNKLRNIRYGFNTILVILIWRIFIARSQMARNIWYFVVSLCYKFLSYF) are necessary and sufficient for PEX19-mediated localization into peroxisome membrane. The chain crosses the membrane as a helical span at residues 466–483 (IRYGFNTILVILIWRIFI). The Peroxisomal segment spans residues 484–515 (ARSQMARNIWYFVVSLCYKFLSYFRASSTMRY).

It belongs to the fatty acyl-CoA reductase family. As to quaternary structure, interacts with PEX19; PEX19 mediates the targeting of FAR1 to peroxisomes.

The protein resides in the peroxisome membrane. The catalysed reaction is a long-chain fatty acyl-CoA + 2 NADPH + 2 H(+) = a long-chain primary fatty alcohol + 2 NADP(+) + CoA. It carries out the reaction hexadecanoyl-CoA + 2 NADPH + 2 H(+) = hexadecan-1-ol + 2 NADP(+) + CoA. It catalyses the reaction octadecanoyl-CoA + 2 NADPH + 2 H(+) = octadecan-1-ol + 2 NADP(+) + CoA. The enzyme catalyses (9Z)-octadecenoyl-CoA + 2 NADPH + 2 H(+) = (9Z)-octadecen-1-ol + 2 NADP(+) + CoA. The catalysed reaction is (9Z,12Z)-octadecadienoyl-CoA + 2 NADPH + 2 H(+) = (9Z,12Z)-octadecadien-1-ol + 2 NADP(+) + CoA. It carries out the reaction eicosanoyl-CoA + 2 NADPH + 2 H(+) = eicosan-1-ol + 2 NADP(+) + CoA. It catalyses the reaction 16-methylheptadecanoyl-CoA + 2 NADPH + 2 H(+) = 16-methylheptadecan-1-ol + 2 NADP(+) + CoA. The enzyme catalyses 18-methylnonadecanoyl-CoA + 2 NADPH + 2 H(+) = 18-methylnonadecan-1-ol + 2 NADP(+) + CoA. Its function is as follows. Catalyzes the reduction of saturated and unsaturated C16 or C18 fatty acyl-CoA to fatty alcohols. It plays an essential role in the production of ether lipids/plasmalogens which synthesis requires fatty alcohols. In parallel, it is also required for wax monoesters production since fatty alcohols also constitute a substrate for their synthesis. In Pongo abelii (Sumatran orangutan), this protein is Fatty acyl-CoA reductase 1.